The sequence spans 202 residues: Inner membrane-spanning protein YciB (202 aa).

Transmembrane regions (helical) follow at residues 3 to 23 (ILFD…AGGN), 46 to 66 (ILLA…WVWM), 73 to 93 (TMLW…LFFH), 100 to 120 (WKPT…AVIF), 145 to 165 (LAWA…AYNF), and 173 to 193 (FKLF…GFYL).

It belongs to the YciB family.

It is found in the cell inner membrane. In terms of biological role, plays a role in cell envelope biogenesis, maintenance of cell envelope integrity and membrane homeostasis. The chain is Inner membrane-spanning protein YciB from Aromatoleum aromaticum (strain DSM 19018 / LMG 30748 / EbN1) (Azoarcus sp. (strain EbN1)).